A 309-amino-acid chain; its full sequence is MTATYMNSSVPFMYDSYPAVAPERFQGQLQGKTAIVTGGSSGIGRAVCKAFASAGASVACIARREPRLKTLVDEIKAEGGKAIPLAVDISEKDAAKKIVSQVEAELGPVDILVNVAGIARLGPLVDEPEDLDIWWKVHEVNVRAPALLTRAVLPSMIERKSGAVISVSSVVATWPSPIQTAYASSKAAISKFHESLAAELEGTGVLSFALNPGSVESELGAPDDAINTASQHPMLEKMRQMLKSPRKKQTAQLPADVCVALVCDPRCKVLNGRHVEAAQDLSPVLEEAEKEGGGRIGKDRLYLVNIGIL.

Residues Ile43, Arg67, Asp88, and Arg150 each contribute to the NADP(+) site. Ser168 (proton donor) is an active-site residue. Residues Tyr182, Lys186, Val215, and Ser217 each contribute to the NADP(+) site. The active-site Proton acceptor is the Tyr182. Lys186 serves as the catalytic Lowers pKa of active site Tyr.

This sequence belongs to the short-chain dehydrogenases/reductases (SDR) family.

Its pathway is secondary metabolite biosynthesis. Its function is as follows. Short chain dehydrogenase; part of the gene cluster that mediates the biosynthesis of an emodin derivative that may be involved in black Sigatoka disease of banana. The pathway begins with the synthesis of atrochrysone thioester by the polyketide synthase PKS8-1. The atrochrysone carboxyl ACP thioesterase MYCFIDRAFT_190111 then breaks the thioester bond and releases the atrochrysone carboxylic acid from PKS8-1. The decarboxylase MYCFIDRAFT_34057 then catalyzes the concerted decarboxylation-elimination required to convert atochrysone carboxylic acid into emodin anthrone, which is further oxidized to emodin by the anthrone oxygenase MYCFIDRAFT_34418. The functions of the other tailoring enzymes as well as the final product of the cluster have still to be identified. This is Short chain dehydrogenase MYCFIDRAFT_6125 from Pseudocercospora fijiensis (strain CIRAD86) (Black leaf streak disease fungus).